The primary structure comprises 38 residues: Potassium channel toxin alpha-KTx 2.3 (38 aa).

3 disulfide bridges follow: Cys7/Cys29, Cys13/Cys34, and Cys17/Cys36.

It belongs to the short scorpion toxin superfamily. Potassium channel inhibitor family. Alpha-KTx 02 subfamily. Expressed by the venom gland.

It is found in the secreted. Its function is as follows. Inhibitor of voltage-gated potassium channels (Kv). It is capable of displacing the binding of radio-labeled noxiustoxin (AC P08815) to rat brain synaptosomes with high affinity (about 100 pM). It is also capable of inhibiting transient potassium-currents (resembling I(A)-type currents), in cultured rat cerebellar granule cells. About 50% of the peak currents are reduced by application of a 1.5 uM solution of this toxin. This Centruroides limpidus (Mexican scorpion) protein is Potassium channel toxin alpha-KTx 2.3.